Reading from the N-terminus, the 641-residue chain is Phosphomethylpyrimidine synthase (641 aa).

The span at 1 to 13 (MNIRSNPDTTRPA) shows a compositional bias: polar residues. Residues 1-21 (MNIRSNPDTTRPAVTTGGLPS) form a disordered region. Substrate-binding positions include asparagine 221, methionine 250, tyrosine 279, histidine 315, 335 to 337 (SRG), 376 to 379 (DGLR), and glutamate 415. Zn(2+) is bound at residue histidine 419. Tyrosine 442 contacts substrate. Residue histidine 483 coordinates Zn(2+). [4Fe-4S] cluster contacts are provided by cysteine 563, cysteine 566, and cysteine 571.

Belongs to the ThiC family. Homodimer. [4Fe-4S] cluster is required as a cofactor.

The enzyme catalyses 5-amino-1-(5-phospho-beta-D-ribosyl)imidazole + S-adenosyl-L-methionine = 4-amino-2-methyl-5-(phosphooxymethyl)pyrimidine + CO + 5'-deoxyadenosine + formate + L-methionine + 3 H(+). The protein operates within cofactor biosynthesis; thiamine diphosphate biosynthesis. Catalyzes the synthesis of the hydroxymethylpyrimidine phosphate (HMP-P) moiety of thiamine from aminoimidazole ribotide (AIR) in a radical S-adenosyl-L-methionine (SAM)-dependent reaction. The sequence is that of Phosphomethylpyrimidine synthase from Rhodopseudomonas palustris (strain BisB5).